Here is a 482-residue protein sequence, read N- to C-terminus: Glutamyl-tRNA(Gln) amidotransferase subunit A (482 aa).

Catalysis depends on charge relay system residues lysine 75 and serine 150. Catalysis depends on serine 174, which acts as the Acyl-ester intermediate.

This sequence belongs to the amidase family. GatA subfamily. In terms of assembly, heterotrimer of A, B and C subunits.

It catalyses the reaction L-glutamyl-tRNA(Gln) + L-glutamine + ATP + H2O = L-glutaminyl-tRNA(Gln) + L-glutamate + ADP + phosphate + H(+). In terms of biological role, allows the formation of correctly charged Gln-tRNA(Gln) through the transamidation of misacylated Glu-tRNA(Gln) in organisms which lack glutaminyl-tRNA synthetase. The reaction takes place in the presence of glutamine and ATP through an activated gamma-phospho-Glu-tRNA(Gln). This is Glutamyl-tRNA(Gln) amidotransferase subunit A from Deinococcus radiodurans (strain ATCC 13939 / DSM 20539 / JCM 16871 / CCUG 27074 / LMG 4051 / NBRC 15346 / NCIMB 9279 / VKM B-1422 / R1).